The primary structure comprises 240 residues: tRNA (guanine-N(7)-)-methyltransferase (240 aa).

The tract at residues 1–20 is disordered; the sequence is MTESHDTPITSDGEARPHRR. S-adenosyl-L-methionine-binding residues include glutamate 70, glutamate 95, aspartate 122, and aspartate 145. Aspartate 145 is a catalytic residue. Substrate-binding positions include lysine 149, aspartate 181, and 218–221; that span reads TKFE.

Belongs to the class I-like SAM-binding methyltransferase superfamily. TrmB family.

It catalyses the reaction guanosine(46) in tRNA + S-adenosyl-L-methionine = N(7)-methylguanosine(46) in tRNA + S-adenosyl-L-homocysteine. It participates in tRNA modification; N(7)-methylguanine-tRNA biosynthesis. Its function is as follows. Catalyzes the formation of N(7)-methylguanine at position 46 (m7G46) in tRNA. This is tRNA (guanine-N(7)-)-methyltransferase from Pseudomonas putida (strain ATCC 700007 / DSM 6899 / JCM 31910 / BCRC 17059 / LMG 24140 / F1).